A 554-amino-acid polypeptide reads, in one-letter code: Acurin A biosynthesis cluster MFS-type transporter (554 aa).

Helical transmembrane passes span 24 to 44 (WLIF…TSII), 60 to 80 (LYIW…AIVG), 96 to 116 (LLIF…GMLL), 123 to 143 (GLGG…MVSL), and 151 to 171 (GILG…GGGF). N-linked (GlcNAc...) asparagine glycosylation is present at Asn-174. Helical transmembrane passes span 179 to 199 (WIFY…VTLL), 219 to 239 (WGGI…LTWA), and 251 to 271 (IVPL…EALP). The N-linked (GlcNAc...) asparagine glycan is linked to Asn-283. 6 helical membrane passes run 289-309 (LFVM…FLPI), 324-344 (VMLF…GILM), 352-372 (SFQY…TLLD), 385-405 (ILFG…ILAS), 417-437 (TWIF…AAVF), and 496-516 (VWQV…LVKA).

It belongs to the major facilitator superfamily.

The protein localises to the membrane. MFS-type transporter that may have a role in the biosynthesis of acurin A, a highly reduced polyketide coupled to a serine via a peptide bond; either in extra- or intracellular transport. This Aspergillus aculeatus (strain ATCC 16872 / CBS 172.66 / WB 5094) protein is Acurin A biosynthesis cluster MFS-type transporter.